Here is a 369-residue protein sequence, read N- to C-terminus: Histone deacetylase 8 (369 aa).

The histone deacetylase stretch occupies residues 5–316 (LLPVYIHSAE…WTYLTALIVG (312 aa)). Substrate is bound at residue aspartate 93. Histidine 135 serves as the catalytic Proton acceptor. Substrate is bound at residue glycine 143. Positions 170, 172, and 259 each coordinate a divalent metal cation. Tyrosine 298 is a substrate binding site.

Belongs to the histone deacetylase family. HD type 1 subfamily. A divalent metal cation serves as cofactor.

Its subcellular location is the nucleus. The protein resides in the chromosome. It localises to the cytoplasm. The catalysed reaction is N(6)-acetyl-L-lysyl-[histone] + H2O = L-lysyl-[histone] + acetate. It catalyses the reaction N(6)-acetyl-L-lysyl-[protein] + H2O = L-lysyl-[protein] + acetate. It carries out the reaction N(6)-(2E)-butenoyl-L-lysyl-[protein] + H2O = (2E)-2-butenoate + L-lysyl-[protein]. Its activity is regulated as follows. Its activity is inhibited by trichostatin A (TSA) and butyrate, 2 well known histone deacetylase inhibitors. Its function is as follows. Histone deacetylase that catalyzes the deacetylation of lysine residues on the N-terminal part of the core histones (H2A, H2B, H3 and H4). Histone deacetylation gives a tag for epigenetic repression and plays an important role in transcriptional regulation, cell cycle progression and developmental events. Histone deacetylases act via the formation of large multiprotein complexes. Also involved in the deacetylation of non-histone proteins. In addition to protein deacetylase activity, also has protein-lysine deacylase activity: acts as a protein decrotonylase by mediating decrotonylation ((2E)-butenoyl) of histones. The polypeptide is Histone deacetylase 8 (hdac8) (Xenopus tropicalis (Western clawed frog)).